An 870-amino-acid chain; its full sequence is Dynamin-2 (870 aa).

Positions H28–P294 constitute a Dynamin-type G domain. The segment at G38–S45 is G1 motif. The GDP site is built by S41, G43, K44, S45, S46, R59, and G60. Residues V64 to R66 are G2 motif. The tract at residues D136 to G139 is G3 motif. The G4 motif stretch occupies residues T205–D208. The GDP site is built by K206, D208, and D211. Y231 is subject to Phosphotyrosine; by SRC. The tract at residues V235–S238 is G5 motif. Residues N236, R237, and Q239 each coordinate GDP. At K299 the chain carries N6-acetyllysine. In terms of domain architecture, PH spans L519–V625. Position 597 is a phosphotyrosine; by SRC (Y597). Residue K598 is modified to N6-acetyllysine. A GED domain is found at V653–V744. The segment at T741–D870 is disordered. T755 carries the phosphothreonine modification. Residues W756–P767 are compositionally biased toward polar residues. S764 carries the post-translational modification Phosphoserine; by CDK1. Positions V796 to A806 are enriched in low complexity. Residues P826–P855 show a composition bias toward pro residues. S848 carries the post-translational modification Phosphoserine; by GSK3-alpha.

This sequence belongs to the TRAFAC class dynamin-like GTPase superfamily. Dynamin/Fzo/YdjA family. In terms of assembly, oligomerizes into a helical polymer that self-assembles around the vesicle membrane, when associated to the menbrane through lipid binding. Interacts with SHANK1 and SHANK2. Interacts with SNX9. Interacts (via C-terminal proline-rich domain (PRD)) with SNX18 (via SH3 domain); this interaction regulates ATG9A and ATG16L1 trafficking from recycling endosomes to sites of autophagosome formation. Interacts with SNX33 (via SH3 domain). Interacts with MYO1E (via SH3 domain). Interacts with PSTPIP1 (via SH3 domain). Interacts with CTNND2. Interacts (via C-terminal proline-rich domain (PRD)) with BIN1 (via SH3 domain); this interaction allows the recruitment of DNM2 to the membrane tubules and inhibits self-assembly-stimulated GTPase activity on the membrane. Interacts with GABARAP, GABARAPL1 and GABARAPL2. Interacts with MAP1LC3B (the lipidate and non-lipidated LC3 form); this interaction mediates recycling endosome scission leading to autophagosome release. Interacts with ITSN1. Interacts (via C-terminal proline-rich domain (PRD)) with SH3BP4 (via SH3 domain); this interaction controls the GTPase activity and is prevented by EGFR-induced tyrosine phosphorylation of either DNM2 or SH3BP4. May interact with PIK3C3. May be a component of a complex composed of RAB5A (in GDP-bound form), DYN2 and PIK3C3. Interacts with SDC4; this interaction is markedly enhanced at focal ahesion site upon induction of focal adhesions and stress-fiber formation. Interacts with ACTN1. Interacts with CTTN; this interaction stimulates the intrinsic GTPase activity of DNM2 and stabilizes the association of DNM2 and actin filaments; in addition this interaction is stimulated by ligand binding to the receptor, leading to the recruitment of the DNM2-CTTN complex to the sequestered receptor-ligand complex to its internalization. Interacts with NOSTRIN (via SH3 domain); this interaction allows the recruitment of NOS3 to dynamin-positive structures. Interacts with TUBG1; this interaction may participate in centrosome cohesion. In terms of processing, phosphorylation at Ser-848 by GSK3-alpha relieves the inhibition of BIN1 and promotes endocytosis. Phosphorylation at Ser-764 by CDK1 is greatly increased upon mitotic entry. It regulates cytokinesis downstream of calcineurin, and does not affect clathrin-mediated endocytosis. Dephosphorylated by calcineurin/PP2 during cytokinesis in a Ca(2+)- and calmodulin-dependent manner. Phosphorylated on tyrosine residues by EGFR and after activation of SRC. Widely expressed. Expressed in skeletal muscle and the peripheral nerve.

The protein resides in the cytoplasm. It localises to the cytoskeleton. The protein localises to the cytoplasmic vesicle. Its subcellular location is the clathrin-coated vesicle. It is found in the cell projection. The protein resides in the uropodium. It localises to the endosome. The protein localises to the microtubule organizing center. Its subcellular location is the centrosome. It is found in the centriole. The protein resides in the recycling endosome. It localises to the phagocytic cup. The protein localises to the phagosome membrane. Its subcellular location is the podosome. It is found in the cell junction. The protein resides in the postsynaptic density. It localises to the synapse. The protein localises to the synaptosome. Its subcellular location is the midbody. It is found in the membrane. The protein resides in the clathrin-coated pit. The enzyme catalyses GTP + H2O = GDP + phosphate + H(+). Its function is as follows. Catalyzes the hydrolysis of GTP and utilizes this energy to mediate vesicle scission at plasma membrane during endocytosis and filament remodeling at many actin structures during organization of the actin cytoskeleton. Plays an important role in vesicular trafficking processes, namely clathrin-mediated endocytosis (CME), exocytic and clathrin-coated vesicle from the trans-Golgi network, and PDGF stimulated macropinocytosis. During vesicular trafficking process, associates to the membrane, through lipid binding, and self-assembles into ring-like structure through oligomerization to form a helical polymer around the vesicle membrane and leading to vesicle scission. Plays a role in organization of the actin cytoskeleton by mediating arrangement of stress fibers and actin bundles in podocytes. During organization of the actin cytoskeleton, self-assembles into ring-like structure that directly bundles actin filaments to form typical membrane tubules decorated with dynamin spiral polymers. Self-assembly increases GTPase activity and the GTP hydrolysis causes the rapid depolymerization of dynamin spiral polymers, and results in dispersion of actin bundles. Remodels, through its interaction with CTTN, bundled actin filaments in a GTPase-dependent manner and plays a role in orchestrating the global actomyosin cytoskeleton. The interaction with CTTN stabilizes the interaction of DNM2 and actin filaments and stimulates the intrinsic GTPase activity that results in actin filament-barbed ends and increases the sensitivity of filaments in bundles to the actin depolymerizing factor, CFL1. Plays a role in the autophagy process, by participating in the formation of ATG9A vesicles destined for the autophagosomes through its interaction with SNX18, by mediating recycling endosome scission leading to autophagosome release through MAP1LC3B interaction. Also regulates maturation of apoptotic cell corpse-containing phagosomes by recruiting PIK3C3 to the phagosome membrane. Also plays a role in cytokinesis. May participate in centrosome cohesion through its interaction with TUBG1. Plays a role in the regulation of neuron morphology, axon growth and formation of neuronal growth cones. Involved in membrane tubulation. This is Dynamin-2 from Homo sapiens (Human).